The chain runs to 400 residues: tRNA-specific 2-thiouridylase MnmA (400 aa).

Residues A19–S26 and L45 contribute to the ATP site. The active-site Nucleophile is C113. C113 and C210 are disulfide-bonded. Residue G137 coordinates ATP. Positions R160–Q162 are interaction with tRNA. Catalysis depends on C210, which acts as the Cysteine persulfide intermediate.

This sequence belongs to the MnmA/TRMU family.

The protein resides in the cytoplasm. The enzyme catalyses S-sulfanyl-L-cysteinyl-[protein] + uridine(34) in tRNA + AH2 + ATP = 2-thiouridine(34) in tRNA + L-cysteinyl-[protein] + A + AMP + diphosphate + H(+). Functionally, catalyzes the 2-thiolation of uridine at the wobble position (U34) of tRNA, leading to the formation of s(2)U34. This Rhodopseudomonas palustris (strain BisB18) protein is tRNA-specific 2-thiouridylase MnmA.